The sequence spans 78 residues: Acyl carrier protein (78 aa).

The Carrier domain maps to 2 to 77; sequence SEIASRVKAI…DAVSYIEEHA (76 aa). Ser-37 is modified (O-(pantetheine 4'-phosphoryl)serine).

This sequence belongs to the acyl carrier protein (ACP) family. In terms of processing, 4'-phosphopantetheine is transferred from CoA to a specific serine of apo-ACP by AcpS. This modification is essential for activity because fatty acids are bound in thioester linkage to the sulfhydryl of the prosthetic group.

The protein resides in the cytoplasm. Its pathway is lipid metabolism; fatty acid biosynthesis. Its function is as follows. Carrier of the growing fatty acid chain in fatty acid biosynthesis. This chain is Acyl carrier protein, found in Bacteroides thetaiotaomicron (strain ATCC 29148 / DSM 2079 / JCM 5827 / CCUG 10774 / NCTC 10582 / VPI-5482 / E50).